A 579-amino-acid polypeptide reads, in one-letter code: Arginine--tRNA ligase (579 aa).

A 'HIGH' region motif is present at residues 136–146 (ANPTGPLHIGH).

It belongs to the class-I aminoacyl-tRNA synthetase family. As to quaternary structure, monomer.

It is found in the cytoplasm. The catalysed reaction is tRNA(Arg) + L-arginine + ATP = L-arginyl-tRNA(Arg) + AMP + diphosphate. The protein is Arginine--tRNA ligase of Anaplasma marginale (strain St. Maries).